A 1690-amino-acid chain; its full sequence is MATGSAQSSFPSHLKKTNGSHGTNGALVQSPSNQSALGAGGTNGNGGVARVWGVATSSSSGLAHCSVGGGDGKMDNMIGDGRSQNCWGASNSNAGINLNLNPNANPAAWPVLGHEGTVATGNPSSICSPVSAIGQNMGSQNGNPVGALGAWGNLLPQESAEPQTSTSQNVSFSVQPQNLNTDGPNNTNPMNSSPNPINAMQTNGLPNWGMAVGMGAIIPPHLQGLPGANGSSVSQGSGSGGEGMGSSVWGLSPGNPATGSTNCGFSQGNGDTVNSALSAKQNGSSSAVQKEGNGGNAWDSGPPAGPGILAWGRGSGTNGIGNIHSGAWGHPSRSSSNGVNGEWGKPPNQHSSSDISGKGSTGWDSASAASQTPALQPGSEHMNSWAKATSSGTTASEGSSDGSGNHNEGSTGREGTGEGRRRDKGVLDQGHIQLPRNDLDPRVLSNSGWGQTPVKQNTAWEFEESPRSERKNDNGTEAWGSIATQPSNSGGKTDGSIMNSTNTSSVSGWVSSPPAAVPANTSWGDSNNKAPSGPGVWGDSISSTAVNNAAATKSGHAWSGTVNQEDKSPTWGEPQKPKSQNWGDGQRANPAWSTGAGDWADSSSVLGHLGDGKKNGSGWDADGNRSGSGWNDATRCGTSGWGSGTNAKVNPGTNWGESLKPGPQQNWAHKPQDNNVSNWGGAASVKQTGTGWIGGPLPVKQKDSSEATGWEEPSPPSIRRKMEIDDGTSAWGDPSTYNNKTVNMWDRNNPVIQSSTTAPATPTTPTSSSTTHRAETPPSHQAGTQLNRSPLLGPVSSGWGEMPSVHSKAENSWGEPSSPCTLVDNGTAAWGKPPSSGSGWDHPAEPVVPFGRASAPAAAPALCKPASKSMQEGWGSGADEMNLGTSQWEDEDGDMWNNAASQESSSSCSSWGNTSKKGLQKGMKTPGKQDEAWIMSRLIKQLTDMGFPREPAEEALKSNSMNLDQAMSALLEKKVDMDKRGLGMTDYNGMVTKPLGCRPPISKESSMDRPTFLDKLTLSFSNQDGGLVEEPTTSPFLPSPSLKLPLSNSALPSQALGGVASGLGMQNLNSSRQIPSGNLGVFGNSGAAQARTMQQPPVQPLNSSQPSLRAQVPQFLSPQVQAQLLQFAAKNIGLSPALLTSPINPQHMTMLNQLYQLQLAYQRLQIQQQMLQAQRNVSGPMRQQEQQVARTITNLQQQIQQHQRQLAQALLVKQPPPPPPPPHLSLHPSAGKSGMESFPPPPQAPGLPDLQTKEQQSSPNTFAPYPLAGLNPNMNVNSIDMSSGLSVKDPSQSQSRLPQWTHPNSMGNLSSAASPLDQNPSKHGAIPGGLSIGPPGKSSIDDSYGRYDLIQNSESPASPPVAVPHSWSRAKSDSDKISNGSSISWPPEFHPGVPWKGLQNIDPENDPDVTPGSVPTGPTINTTIQDVNRYLLKSGGKLSDIKSTWSSGPASHTQASLSHELWKVPRNTTAPTRPPPGLANPKPSSTWGTSPLGWTSSYSSGSAWSTDTSGRTSSWLVLRNLTPQIDGSTLRTLCLQHGPLITFHLNLTQGNAVVRYSSKEEAAKAQKSLHMCVLGNTTILAEFAGEEEVNRFLAQGQALPPTSSWQSSSGGSQPRLGTSGSTHGLVRSDTAHWNTPCLSGKGSSELLWGGVPQYSSSLWGPPSAEDARVIGSPTPLNTLLPGDLLSGESI.

Polar residues-rich tracts occupy residues 1-12 (MATGSAQSSFPS), 19-36 (GSHGTNGALVQSPSNQSA), and 160-183 (AEPQTSTSQNVSFSVQPQNLNTDG). Disordered stretches follow at residues 1 to 42 (MATG…AGGT), 158 to 202 (ESAE…AMQT), 226 to 848 (PGAN…EPVV), and 863 to 928 (CKPA…TPGK). A sufficient for interaction with argonaute family proteins region spans residues 1–921 (MATGSAQSSF…GNTSKKGLQK (921 aa)). Positions 184–198 (PNNTNPMNSSPNPIN) are enriched in low complexity. Positions 255-288 (NPATGSTNCGFSQGNGDTVNSALSAKQNGSSSAV) are enriched in polar residues. R313 is modified (omega-N-methylarginine). Residues 362 to 374 (GWDSASAASQTPA) are compositionally biased toward polar residues. The span at 384–404 (SWAKATSSGTTASEGSSDGSG) shows a compositional bias: low complexity. Residues 415–426 (GTGEGRRRDKGV) show a composition bias toward basic and acidic residues. The span at 444-459 (LSNSGWGQTPVKQNTA) shows a compositional bias: polar residues. Residues 464–474 (ESPRSERKNDN) are compositionally biased toward basic and acidic residues. Residue S465 is modified to Phosphoserine. Composition is skewed to polar residues over residues 482–510 (IATQPSNSGGKTDGSIMNSTNTSSVSGWV), 519–530 (ANTSWGDSNNKA), 540–551 (SISSTAVNNAAA), 644–656 (GTNAKVNPGTNWG), and 663–678 (PQQNWAHKPQDNNVSN). A Phosphoserine modification is found at S714. Residues 754 to 771 (SSTTAPATPTTPTSSSTT) are compositionally biased toward low complexity. A Phosphothreonine modification is found at T776. Positions 778 to 788 (PSHQAGTQLNR) are enriched in polar residues. The segment covering 901-915 (SQESSSSCSSWGNTS) has biased composition (low complexity). Residues 928–973 (KQDEAWIMSRLIKQLTDMGFPREPAEEALKSNSMNLDQAMSALLEK) form the UBA domain. S1006 carries the post-translational modification Phosphoserine. Residues 1156 to 1214 (QLQLAYQRLQIQQQMLQAQRNVSGPMRQQEQQVARTITNLQQQIQQHQRQLAQALLVKQ) are a coiled coil. Disordered regions lie at residues 1212 to 1337 (VKQP…PPGK), 1351 to 1380 (QNSESPASPPVAVPHSWSRAKSDSDKISNG), 1397 to 1421 (GLQNIDPENDPDVTPGSVPTGPTIN), 1441 to 1486 (IKST…PSST), and 1600 to 1625 (PPTSSWQSSSGGSQPRLGTSGSTHGL). Residues 1214–1223 (QPPPPPPPPH) are compositionally biased toward pro residues. The interval 1260 to 1690 (NTFAPYPLAG…PGDLLSGESI (431 aa)) is silencing domain; interaction with CNOT1 and PAN3. Positions 1272-1321 (PNMNVNSIDMSSGLSVKDPSQSQSRLPQWTHPNSMGNLSSAASPLDQNPS) are enriched in polar residues. Positions 1371–1417 (KSDSDKISNGSSISWPPEFHPGVPWKGLQNIDPENDPDVTPGSVPTG) are required for interaction with PABPC1. The tract at residues 1371–1690 (KSDSDKISNG…PGDLLSGESI (320 aa)) is sufficient for translational repression when tethered to a target mRNA. The PABPC1-interacting motif-2 (PAM2) stretch occupies residues 1381–1399 (SSISWPPEFHPGVPWKGLQ). Positions 1441–1457 (IKSTWSSGPASHTQASL) are enriched in polar residues. The region spanning 1565–1632 (AQKSLHMCVL…HGLVRSDTAH (68 aa)) is the RRM domain. The segment at 1596–1690 (GQALPPTSSW…PGDLLSGESI (95 aa)) is interaction with the CCR4-NOT complex. Low complexity predominate over residues 1603-1613 (SSWQSSSGGSQ).

It belongs to the GW182 family. Interacts with one or more of the argonaute family proteins AGO1, AGO2, AGO3 and AGO4. Interacts with CNOT1; the interaction mediates the association with the CCR4-NOT complex. Interacts with PAN3; the interaction mediates the association with the PAN complex.

Functionally, plays a role in RNA-mediated gene silencing by micro-RNAs (miRNAs). Required for miRNA-dependent translational repression of complementary mRNAs by argonaute family proteins As scaffoldng protein associates with argonaute proteins bound to partially complementary mRNAs and simultaneously can recruit CCR4-NOT and PAN deadenylase complexes. The chain is Trinucleotide repeat-containing gene 6C protein (Tnrc6c) from Mus musculus (Mouse).